The sequence spans 203 residues: Outer-membrane lipoprotein LolB (203 aa).

Residues 1–17 form the signal peptide; sequence MNRLFRLLPLASLVLTA. The N-palmitoyl cysteine moiety is linked to residue C18. C18 carries S-diacylglycerol cysteine lipidation.

Belongs to the LolB family. Monomer.

The protein resides in the cell outer membrane. In terms of biological role, plays a critical role in the incorporation of lipoproteins in the outer membrane after they are released by the LolA protein. In Klebsiella pneumoniae subsp. pneumoniae (strain ATCC 700721 / MGH 78578), this protein is Outer-membrane lipoprotein LolB.